The following is a 135-amino-acid chain: Basic phospholipase A2 6 (135 aa).

Intrachain disulfides connect C28-C87, C42-C134, C44-C60, C59-C115, C66-C108, C76-C101, and C94-C106. Ca(2+)-binding residues include Y43, G45, and G47. H63 is a catalytic residue. D64 provides a ligand contact to Ca(2+). D109 is an active-site residue.

It belongs to the phospholipase A2 family. Group I subfamily. D49 sub-subfamily. Ca(2+) serves as cofactor. As to expression, expressed by the venom gland.

The protein resides in the secreted. It catalyses the reaction a 1,2-diacyl-sn-glycero-3-phosphocholine + H2O = a 1-acyl-sn-glycero-3-phosphocholine + a fatty acid + H(+). Its function is as follows. Snake venom phospholipase A2 (PLA2) that inhibits neuromuscular transmission by blocking acetylcholine release from the nerve termini. PLA2 catalyzes the calcium-dependent hydrolysis of the 2-acyl groups in 3-sn-phosphoglycerides. Very weakly suppress the acetylcholine (ACh)-evoked current mediated by alpha-7-similar nAChRs in L.stagnalis neurons. This Bungarus fasciatus (Banded krait) protein is Basic phospholipase A2 6.